We begin with the raw amino-acid sequence, 268 residues long: Bis(5'-nucleosyl)-tetraphosphatase, symmetrical (268 aa).

This sequence belongs to the Ap4A hydrolase family.

The catalysed reaction is P(1),P(4)-bis(5'-adenosyl) tetraphosphate + H2O = 2 ADP + 2 H(+). Its function is as follows. Hydrolyzes diadenosine 5',5'''-P1,P4-tetraphosphate to yield ADP. The sequence is that of Bis(5'-nucleosyl)-tetraphosphatase, symmetrical from Vibrio campbellii (strain ATCC BAA-1116).